The primary structure comprises 397 residues: DNA-directed RNA polymerase subunit Rpo1C (397 aa).

The protein belongs to the RNA polymerase beta' chain family. As to quaternary structure, part of the RNA polymerase complex.

It localises to the cytoplasm. The enzyme catalyses RNA(n) + a ribonucleoside 5'-triphosphate = RNA(n+1) + diphosphate. DNA-dependent RNA polymerase (RNAP) catalyzes the transcription of DNA into RNA using the four ribonucleoside triphosphates as substrates. Forms part of the jaw domain. The chain is DNA-directed RNA polymerase subunit Rpo1C from Methanosarcina acetivorans (strain ATCC 35395 / DSM 2834 / JCM 12185 / C2A).